Consider the following 355-residue polypeptide: S-adenosylmethionine:tRNA ribosyltransferase-isomerase (355 aa).

The protein belongs to the QueA family. In terms of assembly, monomer.

The protein localises to the cytoplasm. It carries out the reaction 7-aminomethyl-7-carbaguanosine(34) in tRNA + S-adenosyl-L-methionine = epoxyqueuosine(34) in tRNA + adenine + L-methionine + 2 H(+). It functions in the pathway tRNA modification; tRNA-queuosine biosynthesis. In terms of biological role, transfers and isomerizes the ribose moiety from AdoMet to the 7-aminomethyl group of 7-deazaguanine (preQ1-tRNA) to give epoxyqueuosine (oQ-tRNA). The chain is S-adenosylmethionine:tRNA ribosyltransferase-isomerase from Burkholderia ambifaria (strain MC40-6).